The sequence spans 195 residues: HTH-type transcriptional regulator BetI (195 aa).

Residues 8–68 enclose the HTH tetR-type domain; the sequence is SIRRRQLIDA…ATMRDITSQL (61 aa). The H-T-H motif DNA-binding region spans 31–50; it reads TIAQIARRAGVSTGIISHYF.

It functions in the pathway amine and polyamine biosynthesis; betaine biosynthesis via choline pathway [regulation]. In terms of biological role, repressor involved in the biosynthesis of the osmoprotectant glycine betaine. It represses transcription of the choline transporter BetT and the genes of BetAB involved in the synthesis of glycine betaine. This chain is HTH-type transcriptional regulator BetI, found in Escherichia coli (strain SMS-3-5 / SECEC).